We begin with the raw amino-acid sequence, 426 residues long: 3-phosphoshikimate 1-carboxyvinyltransferase (426 aa).

Lys-22, Ser-23, and Arg-27 together coordinate 3-phosphoshikimate. Phosphoenolpyruvate is bound at residue Lys-22. Residues Gly-96 and Arg-124 each contribute to the phosphoenolpyruvate site. Residues Ser-170, Ser-171, Gln-172, Ser-198, Asp-314, Asn-337, and Lys-341 each contribute to the 3-phosphoshikimate site. Residue Gln-172 coordinates phosphoenolpyruvate. Asp-314 serves as the catalytic Proton acceptor. 3 residues coordinate phosphoenolpyruvate: Arg-345, Arg-387, and Lys-412.

It belongs to the EPSP synthase family. As to quaternary structure, monomer.

It localises to the cytoplasm. The enzyme catalyses 3-phosphoshikimate + phosphoenolpyruvate = 5-O-(1-carboxyvinyl)-3-phosphoshikimate + phosphate. The protein operates within metabolic intermediate biosynthesis; chorismate biosynthesis; chorismate from D-erythrose 4-phosphate and phosphoenolpyruvate: step 6/7. Functionally, catalyzes the transfer of the enolpyruvyl moiety of phosphoenolpyruvate (PEP) to the 5-hydroxyl of shikimate-3-phosphate (S3P) to produce enolpyruvyl shikimate-3-phosphate and inorganic phosphate. This chain is 3-phosphoshikimate 1-carboxyvinyltransferase, found in Shewanella woodyi (strain ATCC 51908 / MS32).